The following is a 440-amino-acid chain: Xaa-Pro dipeptidase (440 aa).

Mn(2+)-binding residues include aspartate 244, aspartate 255, histidine 336, glutamate 381, and glutamate 420.

Belongs to the peptidase M24B family. Mn(2+) is required as a cofactor. In terms of processing, the N-terminus is blocked.

The catalysed reaction is Xaa-L-Pro dipeptide + H2O = an L-alpha-amino acid + L-proline. It catalyses the reaction diisopropyl fluorophosphate + H2O = diisopropyl phosphate + fluoride + 2 H(+). Its function is as follows. Splits dipeptides with a prolyl or hydroxyprolyl residue in the C-terminal position and a nonpolar amino acid at the N-terminal position. Also catalyzes the hydrolysis of toxic organophosphorus cholinesterase-inhibiting compounds including nerve gases such as diisopropylfluorophosphate (DFP), O-isopropyl methylphosphonofluoridate (sarin), O-pinacolyl methylphosphonofluoridate (soman), and O-cyclohexyl methylphosphonofluoridate. The sequence is that of Xaa-Pro dipeptidase (pepQ) from Pseudoalteromonas haloplanktis (Alteromonas haloplanktis).